A 358-amino-acid chain; its full sequence is DnaJ homolog subfamily C member 18 (358 aa).

The region spanning 82–146 (NYYEILGVSR…DKRLRYDEYG (65 aa)) is the J domain. The chain crosses the membrane as a helical span at residues 228 to 248 (AFIQLLPVLVIVIISVITQLL).

It localises to the endoplasmic reticulum membrane. The chain is DnaJ homolog subfamily C member 18 (DNAJC18) from Macaca fascicularis (Crab-eating macaque).